A 495-amino-acid chain; its full sequence is UDP-N-acetylmuramoyl-L-alanyl-D-glutamate--2,6-diaminopimelate ligase (495 aa).

UDP-N-acetyl-alpha-D-muramoyl-L-alanyl-D-glutamate is bound by residues L27, S29, and 44-46 (HQA). ATP is bound at residue 116–122 (GTNGKTT). UDP-N-acetyl-alpha-D-muramoyl-L-alanyl-D-glutamate is bound by residues N157, 158–159 (TT), S185, Q191, and R193. K225 is subject to N6-carboxylysine. Meso-2,6-diaminopimelate-binding positions include R390, 414-417 (DNPR), G465, and E469. The Meso-diaminopimelate recognition motif motif lies at 414 to 417 (DNPR).

The protein belongs to the MurCDEF family. MurE subfamily. It depends on Mg(2+) as a cofactor. Post-translationally, carboxylation is probably crucial for Mg(2+) binding and, consequently, for the gamma-phosphate positioning of ATP.

Its subcellular location is the cytoplasm. It carries out the reaction UDP-N-acetyl-alpha-D-muramoyl-L-alanyl-D-glutamate + meso-2,6-diaminopimelate + ATP = UDP-N-acetyl-alpha-D-muramoyl-L-alanyl-gamma-D-glutamyl-meso-2,6-diaminopimelate + ADP + phosphate + H(+). The protein operates within cell wall biogenesis; peptidoglycan biosynthesis. In terms of biological role, catalyzes the addition of meso-diaminopimelic acid to the nucleotide precursor UDP-N-acetylmuramoyl-L-alanyl-D-glutamate (UMAG) in the biosynthesis of bacterial cell-wall peptidoglycan. This is UDP-N-acetylmuramoyl-L-alanyl-D-glutamate--2,6-diaminopimelate ligase from Salmonella typhimurium (strain LT2 / SGSC1412 / ATCC 700720).